A 100-amino-acid chain; its full sequence is MIREERLLKVILAPHISEKSTVVAEKTNTVVFRVAIDATKAEIKAAVAKLFEVEVDSVRTLVNKGKTKRTGGRVGRRSDWKKAYVTLAAGADIDFVGGAE.

This sequence belongs to the universal ribosomal protein uL23 family. Part of the 50S ribosomal subunit. Contacts protein L29, and trigger factor when it is bound to the ribosome.

Its function is as follows. One of the early assembly proteins it binds 23S rRNA. One of the proteins that surrounds the polypeptide exit tunnel on the outside of the ribosome. Forms the main docking site for trigger factor binding to the ribosome. The polypeptide is Large ribosomal subunit protein uL23 (Shewanella denitrificans (strain OS217 / ATCC BAA-1090 / DSM 15013)).